Here is a 528-residue protein sequence, read N- to C-terminus: Importin subunit alpha-7 (528 aa).

In terms of domain architecture, IBB spans 1–56; the sequence is MKGGETMSVRRSGYKAVVDGVGGRRRREDDMVEIRKAKREESLLKKRREALPHSPS. 8 ARM repeats span residues 93 to 133, 136 to 175, 178 to 218, 220 to 259, 262 to 301, 304 to 344, 347 to 386, and 390 to 429; these read NVRV…NIAS, SENTEVVIDHGAVAILVRLLNSPYDVVREQVVWALGNISG, PRCR…NLCR, KPQPPFDQVSAALPALAQLIRLDDKELLAYTCWALVYLSD, NEKIQAVIEANVCARLIGLSIHRSPSVITPALRTIGNIVT, DSQT…NITA, QSQIQAVFDADICPALVNLLQNSEGDVKKEAAWAICNAIA, and YKQIMFLVKQECIKPLCDLLTCSDTQLVMVCLEALKKILK.

The protein belongs to the importin alpha family. Forms a complex with importin subunit beta-1.

It is found in the nucleus envelope. Its function is as follows. Binds to conventional NLS motifs and mediates nuclear protein import across the nuclear envelope. Acts as a cellular receptor for the nuclear import of the virD2 protein of Agrobacterium, but is not essential for Agrobacterium-mediated root transformation. The protein is Importin subunit alpha-7 of Arabidopsis thaliana (Mouse-ear cress).